Reading from the N-terminus, the 243-residue chain is Probable septum site-determining protein MinC (243 aa).

This sequence belongs to the MinC family. Interacts with MinD and FtsZ.

Cell division inhibitor that blocks the formation of polar Z ring septums. Rapidly oscillates between the poles of the cell to destabilize FtsZ filaments that have formed before they mature into polar Z rings. Prevents FtsZ polymerization. The sequence is that of Probable septum site-determining protein MinC from Wigglesworthia glossinidia brevipalpis.